A 445-amino-acid chain; its full sequence is Probable D-serine dehydratase (445 aa).

The residue at position 111 (Lys111) is an N6-(pyridoxal phosphate)lysine.

It belongs to the serine/threonine dehydratase family. DsdA subfamily. Pyridoxal 5'-phosphate is required as a cofactor.

The catalysed reaction is D-serine = pyruvate + NH4(+). This Burkholderia pseudomallei (strain 1106a) protein is Probable D-serine dehydratase.